We begin with the raw amino-acid sequence, 563 residues long: Arylsulfatase K (563 aa).

An N-terminal signal peptide occupies residues 1-17; it reads MLLLLVSVIVALALVAP. Residues aspartate 40 and cysteine 80 each contribute to the Ca(2+) site. Cysteine 80 acts as the Nucleophile in catalysis. Cysteine 80 is modified (3-oxoalanine (Cys)). N-linked (GlcNAc...) asparagine glycosylation occurs at asparagine 108. Lysine 128 is a binding site for substrate. N-linked (GlcNAc...) asparagine glycosylation is present at asparagine 191. Histidine 249 contributes to the substrate binding site. An N-linked (GlcNAc...) asparagine glycan is attached at asparagine 260. Positions 311 and 312 each coordinate Ca(2+). Residues asparagine 373, asparagine 411, and asparagine 496 are each glycosylated (N-linked (GlcNAc...) asparagine).

It belongs to the sulfatase family. It depends on Ca(2+) as a cofactor. Post-translationally, the conversion to 3-oxoalanine (also known as C-formylglycine, FGly), of a serine or cysteine residue in prokaryotes and of a cysteine residue in eukaryotes, is critical for catalytic activity. In terms of processing, the 75-kDa precursor undergoes proteolytic processing to yield a 23 kDa form. N-glycosylated with both high mannose and complex type sugars.

It is found in the secreted. Its subcellular location is the lysosome. The catalysed reaction is an aryl sulfate + H2O = a phenol + sulfate + H(+). It catalyses the reaction Hydrolysis of the 2-sulfate groups of the 2-O-sulfo-D-glucuronate residues of chondroitin sulfate, heparin and heparitin sulfate.. Its function is as follows. Catalyzes the hydrolysis of pseudosubstrates such as p-nitrocatechol sulfate and p-nitrophenyl sulfate. Catalyzes the hydrolysis of the 2-sulfate groups of the 2-O-sulfo-D-glucuronate residues of chondroitin sulfate, heparin and heparitin sulfate. Acts selectively on 2-sulfoglucuronate and lacks activity against 2-sulfoiduronate. The sequence is that of Arylsulfatase K (Arsk) from Rattus norvegicus (Rat).